The sequence spans 396 residues: L-tyrosine/L-aspartate decarboxylase (396 aa).

Lysine 245 carries the N6-(pyridoxal phosphate)lysine modification.

This sequence belongs to the group II decarboxylase family. MfnA subfamily. As to quaternary structure, homodimer. Pyridoxal 5'-phosphate is required as a cofactor.

The enzyme catalyses L-tyrosine + H(+) = tyramine + CO2. The catalysed reaction is L-aspartate + H(+) = beta-alanine + CO2. It participates in cofactor biosynthesis; methanofuran biosynthesis. The protein operates within cofactor biosynthesis; coenzyme A biosynthesis. Its activity is regulated as follows. Inhibited by hydroxylamine and O-methylhydroxylamine. Catalyzes the decarboxylation of L-tyrosine to produce tyramine for methanofuran biosynthesis. Can also catalyze the decarboxylation of L-aspartate to produce beta-alanine for coenzyme A (CoA) biosynthesis. In Methanocaldococcus jannaschii (strain ATCC 43067 / DSM 2661 / JAL-1 / JCM 10045 / NBRC 100440) (Methanococcus jannaschii), this protein is L-tyrosine/L-aspartate decarboxylase.